The sequence spans 338 residues: tRNA-specific 2-thiouridylase MnmA (338 aa).

ATP is bound by residues 6-13 and M32; that span reads LMSGGIDS. C87 (nucleophile) is an active-site residue. A disulfide bridge links C87 with C185. G111 provides a ligand contact to ATP. Positions 135–137 are interaction with tRNA; the sequence is KDQ. C185 serves as the catalytic Cysteine persulfide intermediate. An interaction with tRNA region spans residues 288–289; the sequence is RY.

The protein belongs to the MnmA/TRMU family.

Its subcellular location is the cytoplasm. The catalysed reaction is S-sulfanyl-L-cysteinyl-[protein] + uridine(34) in tRNA + AH2 + ATP = 2-thiouridine(34) in tRNA + L-cysteinyl-[protein] + A + AMP + diphosphate + H(+). Catalyzes the 2-thiolation of uridine at the wobble position (U34) of tRNA, leading to the formation of s(2)U34. The protein is tRNA-specific 2-thiouridylase MnmA of Syntrophomonas wolfei subsp. wolfei (strain DSM 2245B / Goettingen).